Reading from the N-terminus, the 457-residue chain is Glucuronide carrier protein homolog (457 aa).

Residues 1–11 lie on the Cytoplasmic side of the membrane; the sequence is MNQQLSWRTIV. The helical transmembrane segment at 12–34 threads the bilayer; it reads GYSLGDVANNFAFAMGALFLLSY. Residues 35–37 lie on the Periplasmic side of the membrane; the sequence is YTD. The helical transmembrane segment at 38–60 threads the bilayer; it reads VAGVGAAAAGTMLLLVRVFDAFA. Residues 61–79 lie on the Cytoplasmic side of the membrane; it reads DVFAGRVVDSVNTRWGKFR. The chain crosses the membrane as a helical span at residues 80–100; sequence PFLLFGTAPLMIFSVLVFWVL. Residues 101–108 are Periplasmic-facing; that stretch reads TDWSHGSK. Residues 109-129 traverse the membrane as a helical segment; sequence VVYAYLTYMGLGLCYSLVNIP. Over 130–146 the chain is Cytoplasmic; sequence YGSLATAMTQQPQSRAR. The helical transmembrane segment at 147-167 threads the bilayer; the sequence is LGAARGIAASLTFVCLAFLIG. At 168 to 180 the chain is on the periplasmic side; the sequence is PSIKNSSPEEMVS. Residues 181–201 traverse the membrane as a helical segment; it reads VYHFWTIVLAIAGMVLYFICF. Topologically, residues 202-228 are cytoplasmic; sequence KSTRENVVRIVAQPSLNISLQTLKRNR. Residues 229–249 traverse the membrane as a helical segment; that stretch reads PLFMLCIGALCVLISTFAVSA. The Periplasmic portion of the chain corresponds to 250–263; sequence SSLFYVRYVLNDTG. A helical membrane pass occupies residues 264–284; it reads LFTVLVLVQNLVGTVASAPLV. Topologically, residues 285–296 are cytoplasmic; that stretch reads PGMVARIGKKNT. The helical transmembrane segment at 297-316 threads the bilayer; sequence FLIGALLGTCGYLLFFWVSV. The Periplasmic segment spans residues 317-320; sequence WSLP. Residues 321–343 form a helical membrane-spanning segment; it reads VALVALAIASIGQGVTMTVMWAL. Topologically, residues 344 to 372 are cytoplasmic; that stretch reads EADTVEYGEYLTGVRIEGLTYSLFSFTRK. Residues 373–393 traverse the membrane as a helical segment; that stretch reads CGQAIGGSIPAFILGLSGYIA. Topologically, residues 394 to 408 are periplasmic; the sequence is NQVQTPEVIMGIRTS. A helical membrane pass occupies residues 409 to 429; the sequence is IALVPCGFMLLAFVIIWFYPL. Topologically, residues 430–457 are cytoplasmic; it reads TDKKFKEIVVEIDNRKKVQQQLISDITN.

This sequence belongs to the sodium:galactoside symporter (TC 2.A.2) family.

The protein resides in the cell inner membrane. This chain is Glucuronide carrier protein homolog (uidB), found in Escherichia coli (strain K12).